An 880-amino-acid chain; its full sequence is Valine--tRNA ligase (880 aa).

The 'HIGH' region motif lies at 51–61 (PNVTGELHLGH). The 'KMSKS' region motif lies at 529-533 (KMSKT). Lys532 lines the ATP pocket. Residues 815–854 (MSTMVDLEVEAKRVKAEISELEIQIERLSTRLSDEQFLAK) adopt a coiled-coil conformation.

This sequence belongs to the class-I aminoacyl-tRNA synthetase family. ValS type 1 subfamily. Monomer.

Its subcellular location is the cytoplasm. The catalysed reaction is tRNA(Val) + L-valine + ATP = L-valyl-tRNA(Val) + AMP + diphosphate. In terms of biological role, catalyzes the attachment of valine to tRNA(Val). As ValRS can inadvertently accommodate and process structurally similar amino acids such as threonine, to avoid such errors, it has a 'posttransfer' editing activity that hydrolyzes mischarged Thr-tRNA(Val) in a tRNA-dependent manner. This is Valine--tRNA ligase from Dehalococcoides mccartyi (strain CBDB1).